Here is a 185-residue protein sequence, read N- to C-terminus: Elongation factor P (185 aa).

It belongs to the elongation factor P family.

The protein resides in the cytoplasm. It functions in the pathway protein biosynthesis; polypeptide chain elongation. Its function is as follows. Involved in peptide bond synthesis. Stimulates efficient translation and peptide-bond synthesis on native or reconstituted 70S ribosomes in vitro. Probably functions indirectly by altering the affinity of the ribosome for aminoacyl-tRNA, thus increasing their reactivity as acceptors for peptidyl transferase. This is Elongation factor P from Methylobacillus flagellatus (strain ATCC 51484 / DSM 6875 / VKM B-1610 / KT).